Reading from the N-terminus, the 429-residue chain is Enolase (429 aa).

Residue Gln167 participates in (2R)-2-phosphoglycerate binding. Glu209 functions as the Proton donor in the catalytic mechanism. Residues Asp246, Glu289, and Asp316 each contribute to the Mg(2+) site. (2R)-2-phosphoglycerate contacts are provided by Lys341, Arg370, Ser371, and Lys392. Lys341 functions as the Proton acceptor in the catalytic mechanism.

It belongs to the enolase family. In terms of assembly, component of the RNA degradosome, a multiprotein complex involved in RNA processing and mRNA degradation. Mg(2+) is required as a cofactor.

The protein localises to the cytoplasm. Its subcellular location is the secreted. It localises to the cell surface. The catalysed reaction is (2R)-2-phosphoglycerate = phosphoenolpyruvate + H2O. It participates in carbohydrate degradation; glycolysis; pyruvate from D-glyceraldehyde 3-phosphate: step 4/5. In terms of biological role, catalyzes the reversible conversion of 2-phosphoglycerate (2-PG) into phosphoenolpyruvate (PEP). It is essential for the degradation of carbohydrates via glycolysis. The polypeptide is Enolase (Pseudomonas fluorescens (strain ATCC BAA-477 / NRRL B-23932 / Pf-5)).